The chain runs to 935 residues: Protocadherin gamma-A11 (935 aa).

Positions 1–29 are cleaved as a signal peptide; sequence MANRLQRGDRSRLLLLLCIFLGTLRGFRA. 6 consecutive Cadherin domains span residues 30–134, 135–243, 244–348, 349–453, 454–563, and 571–677; these read RQIR…APSF, QEDE…IPMF, TQSV…APEI, TITS…PPVF, PHSS…APEI, and DGST…ADLG. Over 30–693 the chain is Extracellular; that stretch reads RQIRYSVPEE…NSEASDLSLY (664 aa). A glycan (N-linked (GlcNAc...) asparagine) is linked at Asn48. Asn255, Asn266, Asn420, and Asn546 each carry an N-linked (GlcNAc...) asparagine glycan. The chain crosses the membrane as a helical span at residues 694-714; sequence LVVAVAAVSCIFLVFVIVLLA. The Cytoplasmic segment spans residues 715 to 935; sequence LRLWRWHKSR…KKKSGKKEKK (221 aa). Disordered regions lie at residues 805–844 and 905–935; these read CDPT…WPNN and ATLT…KEKK. The segment covering 807 to 844 has biased composition (polar residues); the sequence is PTSNQQAPPNTDWRFSQAQRPGTSGSQNGDDTGTWPNN. A compositionally biased stretch (basic residues) spans 925–935; sequence NKKKSGKKEKK.

It localises to the cell membrane. In terms of biological role, potential calcium-dependent cell-adhesion protein. May be involved in the establishment and maintenance of specific neuronal connections in the brain. In Pan troglodytes (Chimpanzee), this protein is Protocadherin gamma-A11 (PCDHGA11).